We begin with the raw amino-acid sequence, 230 residues long: Small ribosomal subunit protein uS3 (230 aa).

In terms of domain architecture, KH type-2 spans Val43 to Ala95.

The protein belongs to the universal ribosomal protein uS3 family. As to quaternary structure, part of the 30S ribosomal subunit.

In terms of biological role, binds the lower part of the 30S subunit head. This chain is Small ribosomal subunit protein uS3, found in Nanoarchaeum equitans (strain Kin4-M).